The chain runs to 443 residues: Tol-Pal system protein TolB (443 aa).

An N-terminal signal peptide occupies residues 1–24 (MSFQIRVFTAILAVLSLFTAPVLA). The segment at 424 to 443 (LRPVRTPEGGSDPSWSPLQR) is disordered.

It belongs to the TolB family. The Tol-Pal system is composed of five core proteins: the inner membrane proteins TolA, TolQ and TolR, the periplasmic protein TolB and the outer membrane protein Pal. They form a network linking the inner and outer membranes and the peptidoglycan layer.

Its subcellular location is the periplasm. Functionally, part of the Tol-Pal system, which plays a role in outer membrane invagination during cell division and is important for maintaining outer membrane integrity. This chain is Tol-Pal system protein TolB, found in Roseobacter denitrificans (strain ATCC 33942 / OCh 114) (Erythrobacter sp. (strain OCh 114)).